The sequence spans 323 residues: Penicillopepsin-1 (323 aa).

Residue Ser3 is glycosylated (O-linked (Man...) serine). A glycan (O-linked (Man...) threonine) is linked at Thr7. In terms of domain architecture, Peptidase A1 spans 17–320; sequence YITPVTIGGT…DSDGPQLGFA (304 aa). Catalysis depends on residues Asp33 and Asp213. Residues Cys249 and Cys283 are joined by a disulfide bond.

This sequence belongs to the peptidase A1 family. In terms of assembly, monomer.

The protein localises to the secreted. It catalyses the reaction Hydrolysis of proteins with broad specificity similar to that of pepsin A, preferring hydrophobic residues at P1 and P1', but also cleaving 20-Gly-|-Glu-21 in the B chain of insulin. Clots milk, and activates trypsinogen.. In terms of biological role, secreted aspartic endopeptidase that allows assimilation of proteinaceous substrates. The scissile peptide bond is attacked by a nucleophilic water molecule activated by two aspartic residues in the active site. Shows a broad primary substrate specificity. Favors hydrophobic residues at the P1 and P1' positions, but can also activate trypsinogen and hydrolyze the B chain of insulin between positions 'Gly-20' and 'Glu-21'. The protein is Penicillopepsin-1 of Penicillium janthinellum (Penicillium vitale).